The chain runs to 901 residues: Schlafen family member 11 (901 aa).

Residues E209 and E214 each contribute to the Mg(2+) site. K216 is a catalytic residue. Zn(2+) contacts are provided by H285, C287, C321, and C322. 599 to 606 (GLPGSGKT) is a binding site for ATP.

The protein belongs to the Schlafen family. Subgroup III subfamily. Homodimer. Interacts with MCM3. Interacts with DHX9. Interacts with RPA1. The cofactor is Mg(2+). Exhibits a wider expression range in ovarian and colon adenocarcinoma than in their corresponding healthy tissues.

The protein localises to the nucleus. It is found in the chromosome. Functionally, inhibitor of DNA replication that promotes cell death in response to DNA damage. Acts as a guardian of the genome by killing cells with defective replication. Persistently blocks stressed replication forks by opening chromatin across replication initiation sites at stressed replication forks, possibly leading to unwind DNA ahead of the MCM helicase and block fork progression, ultimately leading to cell death. Upon DNA damage, inhibits translation of ATR or ATM based on distinct codon usage without disrupting early DNA damage response signaling. Antiviral restriction factor with manganese-dependent type II tRNA endoribonuclease. A single tRNA molecule is bound and cleaved by the SLFN11 dimer. Specifically abrogates the production of retroviruses such as human immunodeficiency virus 1 (HIV-1) by acting as a specific inhibitor of the synthesis of retroviruses encoded proteins in a codon-usage-dependent manner. Impairs the replication of human cytomegalovirus (HCMV) and some Flaviviruses. Exploits the unique viral codon bias towards A/T nucleotides. Also acts as an interferon (IFN)-induced antiviral protein which acts as an inhibitor of retrovirus protein synthesis. The chain is Schlafen family member 11 from Homo sapiens (Human).